The sequence spans 256 residues: Thiazole synthase (256 aa).

The active-site Schiff-base intermediate with DXP is Lys95. 1-deoxy-D-xylulose 5-phosphate-binding positions include Gly156, 182–183 (AG), and 204–205 (NT).

The protein belongs to the ThiG family. As to quaternary structure, homotetramer. Forms heterodimers with either ThiH or ThiS.

The protein resides in the cytoplasm. It carries out the reaction [ThiS sulfur-carrier protein]-C-terminal-Gly-aminoethanethioate + 2-iminoacetate + 1-deoxy-D-xylulose 5-phosphate = [ThiS sulfur-carrier protein]-C-terminal Gly-Gly + 2-[(2R,5Z)-2-carboxy-4-methylthiazol-5(2H)-ylidene]ethyl phosphate + 2 H2O + H(+). It functions in the pathway cofactor biosynthesis; thiamine diphosphate biosynthesis. In terms of biological role, catalyzes the rearrangement of 1-deoxy-D-xylulose 5-phosphate (DXP) to produce the thiazole phosphate moiety of thiamine. Sulfur is provided by the thiocarboxylate moiety of the carrier protein ThiS. In vitro, sulfur can be provided by H(2)S. The polypeptide is Thiazole synthase (Salmonella typhi).